We begin with the raw amino-acid sequence, 463 residues long: Probable diacyglycerol O-acyltransferase tgs1 (463 aa).

His-137 (proton acceptor) is an active-site residue.

Belongs to the long-chain O-acyltransferase family.

The enzyme catalyses an acyl-CoA + a 1,2-diacyl-sn-glycerol = a triacyl-sn-glycerol + CoA. The protein operates within glycerolipid metabolism; triacylglycerol biosynthesis. Functionally, catalyzes the terminal and only committed step in triacylglycerol synthesis by using diacylglycerol and fatty acyl CoA as substrates. Required for storage lipid synthesis. This chain is Probable diacyglycerol O-acyltransferase tgs1 (tgs1), found in Mycobacterium tuberculosis (strain CDC 1551 / Oshkosh).